Here is a 139-residue protein sequence, read N- to C-terminus: Basic phospholipase A2 beta-bungarotoxin A2 chain (139 aa).

The first 9 residues, alanine 1–alanine 9, serve as a signal peptide directing secretion. The propeptide occupies alanine 10–phenylalanine 17. Positions 45, 47, and 49 each coordinate Ca(2+). Cysteine 46 and cysteine 62 are oxidised to a cystine. The active site involves histidine 65. Aspartate 66 contacts Ca(2+).

The protein belongs to the phospholipase A2 family. Group I subfamily. D49 sub-subfamily. Heterodimer; disulfide-linked. The A chains have phospholipase A2 activity and the B chains show homology with the basic protease inhibitors. The cofactor is Ca(2+). As to expression, expressed by the venom gland.

Its subcellular location is the secreted. It carries out the reaction a 1,2-diacyl-sn-glycero-3-phosphocholine + H2O = a 1-acyl-sn-glycero-3-phosphocholine + a fatty acid + H(+). In terms of biological role, snake venom phospholipase A2 (PLA2) that shows presynaptic neurotoxicity. PLA2 catalyzes the calcium-dependent hydrolysis of the 2-acyl groups in 3-sn-phosphoglycerides. This Bungarus candidus (Malayan krait) protein is Basic phospholipase A2 beta-bungarotoxin A2 chain.